Reading from the N-terminus, the 132-residue chain is Small ribosomal subunit protein uS8 (132 aa).

It belongs to the universal ribosomal protein uS8 family. As to quaternary structure, part of the 30S ribosomal subunit. Contacts proteins S5 and S12.

Functionally, one of the primary rRNA binding proteins, it binds directly to 16S rRNA central domain where it helps coordinate assembly of the platform of the 30S subunit. The sequence is that of Small ribosomal subunit protein uS8 from Shouchella clausii (strain KSM-K16) (Alkalihalobacillus clausii).